The chain runs to 221 residues: 5'-nucleotidase (221 aa).

Asp-14 acts as the Nucleophile in catalysis.

The protein belongs to the HAD-like hydrolase superfamily. It depends on Mn(2+) as a cofactor. The cofactor is Mg(2+).

It carries out the reaction a ribonucleoside 5'-phosphate + H2O = a ribonucleoside + phosphate. In terms of biological role, specifically dephosphorylates nucleoside 5'-monophosphates to nucleosides and inorganic phosphate. Displays high activity toward 5'-UMP and 5'-IMP, significant activity against 5'-XMP and 5'-TMP, and low activity against 5'-CMP. The sequence is that of 5'-nucleotidase from Pseudomonas aeruginosa (strain ATCC 15692 / DSM 22644 / CIP 104116 / JCM 14847 / LMG 12228 / 1C / PRS 101 / PAO1).